The chain runs to 225 residues: Thymidylate kinase (225 aa).

Residue 15–22 (GGEGSGKS) participates in ATP binding.

This sequence belongs to the thymidylate kinase family.

The enzyme catalyses dTMP + ATP = dTDP + ADP. Functionally, phosphorylation of dTMP to form dTDP in both de novo and salvage pathways of dTTP synthesis. This chain is Thymidylate kinase, found in Protochlamydia amoebophila (strain UWE25).